The sequence spans 500 residues: Glutamate--tRNA ligase (500 aa).

The short motif at 12 to 22 (PSPTGHLHIGN) is the 'HIGH' region element. Positions 259 to 263 (KLSKR) match the 'KMSKS' region motif. Lysine 262 serves as a coordination point for ATP.

The protein belongs to the class-I aminoacyl-tRNA synthetase family. Glutamate--tRNA ligase type 1 subfamily. As to quaternary structure, monomer.

It localises to the cytoplasm. The enzyme catalyses tRNA(Glu) + L-glutamate + ATP = L-glutamyl-tRNA(Glu) + AMP + diphosphate. Catalyzes the attachment of glutamate to tRNA(Glu) in a two-step reaction: glutamate is first activated by ATP to form Glu-AMP and then transferred to the acceptor end of tRNA(Glu). The protein is Glutamate--tRNA ligase of Lactobacillus delbrueckii subsp. bulgaricus.